A 405-amino-acid chain; its full sequence is L-carnitine CoA-transferase (405 aa).

Positions 97 and 104 each coordinate CoA. Catalysis depends on D169, which acts as the Nucleophile.

The protein belongs to the CoA-transferase III family. CaiB subfamily. Homodimer.

Its subcellular location is the cytoplasm. It carries out the reaction crotonobetainyl-CoA + (R)-carnitine = crotonobetaine + (R)-carnitinyl-CoA. The enzyme catalyses 4-(trimethylamino)butanoyl-CoA + (R)-carnitine = (R)-carnitinyl-CoA + 4-(trimethylamino)butanoate. It participates in amine and polyamine metabolism; carnitine metabolism. Its function is as follows. Catalyzes the reversible transfer of the CoA moiety from gamma-butyrobetainyl-CoA to L-carnitine to generate L-carnitinyl-CoA and gamma-butyrobetaine. Is also able to catalyze the reversible transfer of the CoA moiety from gamma-butyrobetainyl-CoA or L-carnitinyl-CoA to crotonobetaine to generate crotonobetainyl-CoA. The chain is L-carnitine CoA-transferase from Escherichia fergusonii (strain ATCC 35469 / DSM 13698 / CCUG 18766 / IAM 14443 / JCM 21226 / LMG 7866 / NBRC 102419 / NCTC 12128 / CDC 0568-73).